An 881-amino-acid chain; its full sequence is Serine/threonine-protein phosphatase BSL1 (881 aa).

3 Kelch repeats span residues 60–109 (GSSS…AVGT), 269–320 (RLHV…DQDP), and 338–385 (RIYV…PRFS). Disordered regions lie at residues 368–407 (SPLL…LSLD) and 436–464 (AGTL…ANEG). Polar residues-rich tracts occupy residues 374-383 (DRTQQSSTPR) and 445-460 (TSDA…TDGT). Ser491 bears the Phosphoserine mark. Positions 503–522 (VPMNNSDVPQPTKKFTRQKS) are disordered. Mn(2+) is bound by residues Asp584, His586, Asp618, and Asn650. His651 (proton donor) is an active-site residue. Mn(2+)-binding residues include His703 and His782. Positions 837 to 881 (ILSPENSPEHSGDDAWMQELNIQRPPTPTRGRPQPDFDRSSLAYI) are disordered. At Ser839 the chain carries Phosphoserine.

This sequence belongs to the PPP phosphatase family. BSU subfamily. As to quaternary structure, interacts with CDG1 and CDL1. Mn(2+) is required as a cofactor. As to expression, expressed in mature cauline leaves and at the tip of influorescence, including flowers. Expressed at lower level in young tissues relative to older ones.

It is found in the nucleus. The enzyme catalyses O-phospho-L-seryl-[protein] + H2O = L-seryl-[protein] + phosphate. It catalyses the reaction O-phospho-L-threonyl-[protein] + H2O = L-threonyl-[protein] + phosphate. Functionally, phosphatase involved in elongation process, probably by acting as a regulator of brassinolide signaling. The polypeptide is Serine/threonine-protein phosphatase BSL1 (BSL1) (Arabidopsis thaliana (Mouse-ear cress)).